The sequence spans 3412 residues: Genome polyprotein (3412 aa).

Positions 2–15 (SKKPGKPGRNRVVN) are interaction with host EXOC1. Topologically, residues 2 to 108 (SKKPGKPGRN…PSKKRGGTRS (107 aa)) are cytoplasmic. The hydrophobic; homodimerization of capsid protein C stretch occupies residues 37–72 (LLDGRGPVRFILAILTFFRFTALQPTEALKRRWRAV). A propeptide spans 104–121 (GGTRSLLGLAALIGLASS) (ER anchor for the capsid protein C, removed in mature form by serine protease NS3). The helical transmembrane segment at 109–129 (LLGLAALIGLASSLQLSTYQG) threads the bilayer. At 130–247 (KVLMSINKTD…TTKYLTKVEN (118 aa)) the chain is on the extracellular side. Asn-136 carries N-linked (GlcNAc...) asparagine; by host glycosylation. Residues 248–268 (WVLRNPGYALVALAIGWMLGS) traverse the membrane as a helical segment. Residues 269-273 (NNTQR) lie on the Cytoplasmic side of the membrane. A helical transmembrane segment spans residues 274-288 (VVFVIMLMLIAPAYS). Residues 289–741 (FNCLGTSNRD…QVFGGAFRTL (453 aa)) lie on the Extracellular side of the membrane. Disulfide bonds link Cys-291-Cys-318, Cys-348-Cys-404, Cys-348-Cys-409, Cys-362-Cys-393, Cys-380-Cys-404, Cys-380-Cys-409, Cys-478-Cys-576, and Cys-593-Cys-624. The fusion peptide stretch occupies residues 386 to 399 (DRGWGNGCGLFGKG). The chain crosses the membrane as a helical span at residues 742 to 762 (FGGMSWITQGLLGALLLWMGL). The Cytoplasmic portion of the chain corresponds to 763–768 (QARDRS). The chain crosses the membrane as a helical span at residues 769 to 789 (ISLTLLAVGGILIFLATSVQA). Residues 790-1214 (DSGCAIDLQR…AFAEMNTGGD (425 aa)) are Extracellular-facing. Cystine bridges form between Cys-793–Cys-804 and Cys-844–Cys-932. 3 N-linked (GlcNAc...) asparagine; by host glycosylation sites follow: Asn-919, Asn-964, and Asn-996. 6 disulfides stabilise this stretch: Cys-968/Cys-1012, Cys-1069/Cys-1118, Cys-1080/Cys-1101, Cys-1080/Cys-1102, Cys-1101/Cys-1105, and Cys-1102/Cys-1105. A helical transmembrane segment spans residues 1215–1235 (VIHLALVAVFKVQPAFLAGLF). The Cytoplasmic portion of the chain corresponds to 1236 to 1245 (LRMQWSNQEN). The helical transmembrane segment at 1246–1266 (ILMVIGAAFLQMAANDLKLEV) threads the bilayer. The Lumenal segment spans residues 1267–1288 (LPILNAMSIAWMLIRAMKEGKV). The chain crosses the membrane as a helical span at residues 1289–1303 (AMYALPILCALTPGM). Position 1304 (Arg-1304) is a topological domain, cytoplasmic. The chain crosses the membrane as a helical span at residues 1305–1325 (MAGLDVIRCLLLIIGIVTLLN). Over 1326 to 1339 (ERRESVAKKKGGYL) the chain is Lumenal. A helical membrane pass occupies residues 1340–1360 (LAAALCQAGVCSPLIMMGGLI). At 1361-1369 (LAHPNGKRS) the chain is on the cytoplasmic side. A helical membrane pass occupies residues 1370 to 1390 (WPASEVLTGVGLMCALAGGLL). The Lumenal segment spans residues 1391–1393 (EFE). Residues 1394 to 1414 (ETSMVVPFAIAGLMYITYTVS) form a helical membrane-spanning segment. Residues 1415–1471 (GKAAEMWIEKAADITWEQNAEITGTSPRLDVDLDSHGNFKLLNDPGAPVHLFALRFI) lie on the Cytoplasmic side of the membrane. An interacts with and activates NS3 protease region spans residues 1422–1461 (IEKAADITWEQNAEITGTSPRLDVDLDSHGNFKLLNDPGA). The helical intramembrane region spans 1472 to 1492 (LLGLSARFHWFIPFGVLGFWL). The Cytoplasmic portion of the chain corresponds to 1493-2167 (LGKHSKRGGA…KEALAELPDS (675 aa)). Residues 1500–1677 (GGALWDVPSP…ERTEEPIPDA (178 aa)) enclose the Peptidase S7 domain. Catalysis depends on charge relay system; for serine protease NS3 activity residues His-1550, Asp-1574, and Ser-1634. Positions 1680–1836 (EEMLRKRKLT…DSNSPILDVE (157 aa)) constitute a Helicase ATP-binding domain. An important for RNA-binding region spans residues 1684–1687 (RKRK). 1693-1700 (LHPGAGKT) serves as a coordination point for ATP. Residues 1784 to 1787 (DEAH) carry the DEAH box motif. Residues 1847–2011 (GYEWITNFTG…GLVAQMYQPE (165 aa)) enclose the Helicase C-terminal domain. Positions 2162 to 2166 (AELPD) are regulates the ATPase activity of NS3 helicase. Residues 2168-2188 (LETLLLIGMLCVMSMGTFIFL) form a helical membrane-spanning segment. Topologically, residues 2189–2193 (MNRKG) are lumenal. Residues 2194–2214 (VGKMGLGAFVMTLATALLWAA) constitute an intramembrane region (helical). A topological domain (lumenal) is located at residue Glu-2215. A helical membrane pass occupies residues 2216 to 2236 (VPGTQIAGVLLIVFLLMIVLI). At 2237–2251 (PEPEKQRSQTDNQLA) the chain is on the cytoplasmic side. The helical transmembrane segment at 2252-2266 (VFLICIMTLMGVVAA) threads the bilayer. The Lumenal segment spans residues 2267 to 2308 (NEMGLLEKTKSDIAKLFGSQPGSVGFATRTTPWDISLDIKPA). Residues 2309 to 2329 (TAWALYAAATMVMTPLIKHLI) constitute an intramembrane region (helical). The Lumenal segment spans residues 2330–2376 (TTQYVNFSLTAIASQAGVLLGLTNGMPFTAMDLSVPLLVLGCWNQMT). The helical transmembrane segment at 2377–2397 (LPSLAVAVMLLAIHYAFMIPG) threads the bilayer. Residues 2398–2440 (WQAEAMRAAQRRTAAGIMKNAVVDGIVATDIPDLSPATPMTEK) lie on the Cytoplasmic side of the membrane. Residues 2441 to 2461 (KMGQILLIAAAVLAVLVRPGI) form a helical membrane-spanning segment. Residues 2462-2466 (CSIKE) are Lumenal-facing. Residues 2467–2487 (FGVLGSAALVTLIEGTAGVVW) form a helical membrane-spanning segment. Residues 2488–3412 (NCTTAVGLCN…IGEEEYRDYM (925 aa)) are Cytoplasmic-facing. One can recognise an mRNA cap 0-1 NS5-type MT domain in the interval 2525 to 2790 (GGGKGATLGE…DVNLGSGTRS (266 aa)). Ser-2580 provides a ligand contact to S-adenosyl-L-methionine. Ser-2580 carries the post-translational modification Phosphoserine. The active-site For 2'-O-MTase activity is Lys-2585. Residues Gly-2610, Trp-2611, Thr-2628, Lys-2629, Asp-2655, and Val-2656 each contribute to the S-adenosyl-L-methionine site. Asp-2670 (for 2'-O-MTase activity) is an active-site residue. Ile-2671 contacts S-adenosyl-L-methionine. Active-site for 2'-O-MTase activity residues include Lys-2706 and Glu-2742. Tyr-2744 contacts S-adenosyl-L-methionine. The span at 2771-2780 (QNRSGPRYEE) shows a compositional bias: basic and acidic residues. A disordered region spans residues 2771–2791 (QNRSGPRYEEDVNLGSGTRSV). Positions 2964, 2968, 2973, and 2976 each coordinate Zn(2+). The RdRp catalytic domain maps to 3054–3206 (GKMYADDTAG…KPIDDRFATA (153 aa)). His-3241, Cys-3257, and Cys-3376 together coordinate Zn(2+).

The protein in the N-terminal section; belongs to the class I-like SAM-binding methyltransferase superfamily. mRNA cap 0-1 NS5-type methyltransferase family. In terms of assembly, homodimer. Interacts (via N-terminus) with host EXOC1 (via C-terminus); this interaction results in EXOC1 degradation through the proteasome degradation pathway. Forms heterodimers with envelope protein E in the endoplasmic reticulum and Golgi. As to quaternary structure, homodimer; in the endoplasmic reticulum and Golgi. Interacts with protein prM. Interacts with non-structural protein 1. In terms of assembly, homodimer; Homohexamer when secreted. Interacts with envelope protein E. NS1 interacts with NS4B. Interacts with host complement protein CFH; this interaction leads to the degradation of C3. Interacts (via N-terminus) with serine protease NS3. As to quaternary structure, forms a heterodimer with serine protease NS3. May form homooligomers. In terms of assembly, forms a heterodimer with NS2B. Interacts with non-structural protein 2A (via N-terminus). Interacts with NS4B. Interacts with unphosphorylated RNA-directed RNA polymerase NS5; this interaction stimulates RNA-directed RNA polymerase NS5 guanylyltransferase activity. Interacts with serine protease NS3. As to quaternary structure, homodimer. Interacts with host STAT2; this interaction inhibits the phosphorylation of the latter, and, when all viral proteins are present (polyprotein), targets STAT2 for degradation. Interacts with serine protease NS3. Post-translationally, specific enzymatic cleavages in vivo yield mature proteins. Cleavages in the lumen of endoplasmic reticulum are performed by host signal peptidase, whereas cleavages in the cytoplasmic side are performed by serine protease NS3. Signal cleavage at the 2K-4B site requires a prior NS3 protease-mediated cleavage at the 4A-2K site. In terms of processing, cleaved in post-Golgi vesicles by a host furin, releasing the mature small envelope protein M, and peptide pr. This cleavage is incomplete as up to 30% of viral particles still carry uncleaved prM. N-glycosylated. Post-translationally, N-glycosylated. The excreted form is glycosylated and this is required for efficient secretion of the protein from infected cells. In terms of processing, phosphorylated on serines residues. This phosphorylation may trigger NS5 nuclear localization.

The protein resides in the virion. The protein localises to the host nucleus. Its subcellular location is the host cytoplasm. It localises to the host perinuclear region. It is found in the secreted. The protein resides in the virion membrane. The protein localises to the host endoplasmic reticulum membrane. It carries out the reaction Selective hydrolysis of -Xaa-Xaa-|-Yaa- bonds in which each of the Xaa can be either Arg or Lys and Yaa can be either Ser or Ala.. The catalysed reaction is RNA(n) + a ribonucleoside 5'-triphosphate = RNA(n+1) + diphosphate. The enzyme catalyses a ribonucleoside 5'-triphosphate + H2O = a ribonucleoside 5'-diphosphate + phosphate + H(+). It catalyses the reaction ATP + H2O = ADP + phosphate + H(+). It carries out the reaction a 5'-end (5'-triphosphoguanosine)-ribonucleoside in mRNA + S-adenosyl-L-methionine = a 5'-end (N(7)-methyl 5'-triphosphoguanosine)-ribonucleoside in mRNA + S-adenosyl-L-homocysteine. The catalysed reaction is a 5'-end (N(7)-methyl 5'-triphosphoguanosine)-ribonucleoside in mRNA + S-adenosyl-L-methionine = a 5'-end (N(7)-methyl 5'-triphosphoguanosine)-(2'-O-methyl-ribonucleoside) in mRNA + S-adenosyl-L-homocysteine + H(+). Plays a role in virus budding by binding to the cell membrane and gathering the viral RNA into a nucleocapsid that forms the core of a mature virus particle. During virus entry, may induce genome penetration into the host cytoplasm after hemifusion induced by the surface proteins. Can migrate to the cell nucleus where it modulates host functions. Overcomes the anti-viral effects of host EXOC1 by sequestering and degrading the latter through the proteasome degradation pathway. Its function is as follows. Inhibits RNA silencing by interfering with host Dicer. In terms of biological role, prevents premature fusion activity of envelope proteins in trans-Golgi by binding to envelope protein E at pH6.0. After virion release in extracellular space, gets dissociated from E dimers. Functionally, acts as a chaperone for envelope protein E during intracellular virion assembly by masking and inactivating envelope protein E fusion peptide. prM is the only viral peptide matured by host furin in the trans-Golgi network probably to avoid catastrophic activation of the viral fusion activity in acidic Golgi compartment prior to virion release. prM-E cleavage is inefficient, and many virions are only partially matured. These uncleaved prM would play a role in immune evasion. May play a role in virus budding. Exerts cytotoxic effects by activating a mitochondrial apoptotic pathway through M ectodomain. May display a viroporin activity. Its function is as follows. Binds to host cell surface receptor and mediates fusion between viral and cellular membranes. Envelope protein is synthesized in the endoplasmic reticulum in the form of heterodimer with protein prM. They play a role in virion budding in the ER, and the newly formed immature particle is covered with 60 spikes composed of heterodimer between precursor prM and envelope protein E. The virion is transported to the Golgi apparatus where the low pH causes dissociation of PrM-E heterodimers and formation of E homodimers. prM-E cleavage is inefficient, and many virions are only partially matured. These uncleaved prM would play a role in immune evasion. In terms of biological role, involved in immune evasion, pathogenesis and viral replication. Once cleaved off the polyprotein, is targeted to three destinations: the viral replication cycle, the plasma membrane and the extracellular compartment. Essential for viral replication. Required for formation of the replication complex and recruitment of other non-structural proteins to the ER-derived membrane structures. Excreted as a hexameric lipoparticle that plays a role against host immune response. Antagonizing the complement function. Binds to the host macrophages and dendritic cells. Inhibits signal transduction originating from Toll-like receptor 3 (TLR3). Functionally, component of the viral RNA replication complex that functions in virion assembly and antagonizes the host alpha/beta interferon antiviral response. Required cofactor for the serine protease function of NS3. May have membrane-destabilizing activity and form viroporins. Its function is as follows. Displays three enzymatic activities: serine protease, NTPase and RNA helicase. NS3 serine protease, in association with NS2B, performs its autocleavage and cleaves the polyprotein at dibasic sites in the cytoplasm: C-prM, NS2A-NS2B, NS2B-NS3, NS3-NS4A, NS4A-2K and NS4B-NS5. NS3 RNA helicase binds RNA and unwinds dsRNA in the 3' to 5' direction. In terms of biological role, regulates the ATPase activity of the NS3 helicase activity. NS4A allows NS3 helicase to conserve energy during unwinding. Functionally, functions as a signal peptide for NS4B and is required for the interferon antagonism activity of the latter. Induces the formation of ER-derived membrane vesicles where the viral replication takes place. Inhibits interferon (IFN)-induced host STAT1 phosphorylation and nuclear translocation, thereby preventing the establishment of cellular antiviral state by blocking the IFN-alpha/beta pathway. Inhibits STAT2 translocation in the nucleus after IFN-alpha treatment. Its function is as follows. Replicates the viral (+) and (-) RNA genome, and performs the capping of genomes in the cytoplasm. NS5 methylates viral RNA cap at guanine N-7 and ribose 2'-O positions. Besides its role in RNA genome replication, also prevents the establishment of cellular antiviral state by blocking the interferon-alpha/beta (IFN-alpha/beta) signaling pathway. Inhibits host TYK2 and STAT2 phosphorylation, thereby preventing activation of JAK-STAT signaling pathway. The protein is Genome polyprotein of Agelaius tricolor (Tricolored blackbird).